The primary structure comprises 385 residues: Pepsin A (385 aa).

The N-terminal stretch at 1–15 (MKWLLLLSLVVLSEC) is a signal peptide. Residues 16–59 (LVKVPLVRKKSLRQNLIKNGKLKDFLKTHKHNPASKYFPEAAAL) constitute a propeptide, activation peptide. In terms of domain architecture, Peptidase A1 spans 73–382 (YFGTIGIGTP…DRANNKVGLA (310 aa)). Asp-91 is a catalytic residue. An intrachain disulfide couples Cys-104 to Cys-109. Position 127 is a phosphoserine (Ser-127). Cys-265 and Cys-269 are oxidised to a cystine. The active site involves Asp-274. A disulfide bridge connects residues Cys-308 and Cys-341.

The protein belongs to the peptidase A1 family. In terms of processing, minor amounts of the active enzyme occur with 'Ala-58' at the amino end.

It is found in the secreted. The enzyme catalyses Preferential cleavage: hydrophobic, preferably aromatic, residues in P1 and P1' positions. Cleaves 1-Phe-|-Val-2, 4-Gln-|-His-5, 13-Glu-|-Ala-14, 14-Ala-|-Leu-15, 15-Leu-|-Tyr-16, 16-Tyr-|-Leu-17, 23-Gly-|-Phe-24, 24-Phe-|-Phe-25 and 25-Phe-|-Tyr-26 bonds in the B chain of insulin.. In terms of biological role, shows particularly broad specificity; although bonds involving phenylalanine and leucine are preferred, many others are also cleaved to some extent. This is Pepsin A (PGA) from Sus scrofa (Pig).